The primary structure comprises 81 residues: Small ribosomal subunit protein bS18 (81 aa).

This sequence belongs to the bacterial ribosomal protein bS18 family. Part of the 30S ribosomal subunit. Forms a tight heterodimer with protein bS6.

In terms of biological role, binds as a heterodimer with protein bS6 to the central domain of the 16S rRNA, where it helps stabilize the platform of the 30S subunit. The polypeptide is Small ribosomal subunit protein bS18 (Chlamydia muridarum (strain MoPn / Nigg)).